A 177-amino-acid polypeptide reads, in one-letter code: Antigen TyF1 (177 aa).

Belongs to the Dps family. As to quaternary structure, homodecamer.

This chain is Antigen TyF1, found in Treponema pallidum subsp. pertenue (Yaws treponeme).